We begin with the raw amino-acid sequence, 349 residues long: UDP-N-acetylenolpyruvoylglucosamine reductase (349 aa).

Positions 17 to 187 (VNESADLIIQ…TAITLRLNKQ (171 aa)) constitute an FAD-binding PCMH-type domain. Arg-163 is an active-site residue. The active-site Proton donor is the Ser-233. The active site involves Glu-328.

The protein belongs to the MurB family. Requires FAD as cofactor.

It localises to the cytoplasm. The enzyme catalyses UDP-N-acetyl-alpha-D-muramate + NADP(+) = UDP-N-acetyl-3-O-(1-carboxyvinyl)-alpha-D-glucosamine + NADPH + H(+). Its pathway is cell wall biogenesis; peptidoglycan biosynthesis. Functionally, cell wall formation. The polypeptide is UDP-N-acetylenolpyruvoylglucosamine reductase (Aliivibrio fischeri (strain ATCC 700601 / ES114) (Vibrio fischeri)).